A 91-amino-acid chain; its full sequence is Elongation factor 1-beta (91 aa).

This sequence belongs to the EF-1-beta/EF-1-delta family.

Functionally, promotes the exchange of GDP for GTP in EF-1-alpha/GDP, thus allowing the regeneration of EF-1-alpha/GTP that could then be used to form the ternary complex EF-1-alpha/GTP/AAtRNA. This is Elongation factor 1-beta from Pyrococcus furiosus (strain ATCC 43587 / DSM 3638 / JCM 8422 / Vc1).